Consider the following 273-residue polypeptide: Homeobox protein Nkx-2.2 (273 aa).

Disordered regions lie at residues 1–56 and 91–131; these read MSLT…LDAV and AASA…KRKR. Over residues 20-38 the composition is skewed to acidic residues; it reads DTNDEDGSVAEGPEEESEG. The homeobox DNA-binding region spans 128-187; it reads KRKRRVLFSKAQTYELERRFRQQRYLSAPEREHLASLIRLTPTQVKIWFQNHRYKMKRAR.

The protein belongs to the NK-2 homeobox family. In terms of assembly, interacts with OLIG2. In terms of tissue distribution, expressed in restricted areas of the developing CNS: the hindbrain and forebrain, and pancreas.

The protein localises to the nucleus. Functionally, transcriptional activator involved in the development of insulin-producting beta cells in the endocrine pancreas. May also be involved in specifying diencephalic neuromeric boundaries, and in controlling the expression of genes that play a role in axonal guidance. Binds to elements within the NEUROD1 promoter. The protein is Homeobox protein Nkx-2.2 (Nkx2-2) of Mus musculus (Mouse).